A 299-amino-acid polypeptide reads, in one-letter code: Single myb histone 1 (299 aa).

In terms of domain architecture, HTH myb-type spans Met1–Gly61. Positions Trp28–Ser57 form a DNA-binding region, H-T-H motif. Residues Ser124 to Pro192 form the H15 domain. Residues Glu238–Leu279 adopt a coiled-coil conformation.

The protein belongs to the histone H1/H5 family. SMH subfamily. As to quaternary structure, forms a homodimer and heterodimers. In terms of tissue distribution, expressed in leaves.

The protein resides in the nucleus. The protein localises to the chromosome. Its subcellular location is the nucleolus. It is found in the telomere. Binds preferentially double-stranded telomeric repeats 5'-TTTAGGG-3', but can also bind to the single G-rich and C-rich telomeric strand. The protein is Single myb histone 1 (SMH1) of Zea mays (Maize).